The primary structure comprises 543 residues: MFS-type transporter pyvG (543 aa).

Positions 24 to 71 (PPTEQQPGFQLPPPYRLAATRTQPQQQQEQEQEQEQAKPATRPPWNEP) are disordered. N94 carries N-linked (GlcNAc...) asparagine glycosylation. 12 consecutive transmembrane segments (helical) span residues 101 to 121 (LLVYLEVNLITFMVYMSVAIF), 141 to 161 (LGMSLYVLGYGTGPMIWSPLS), 178 to 198 (IFLLLSIPTAVVNNVPGFLIL), 203 to 223 (GFFGSPGLATGGASIADVTGL), 230 to 250 (LYVWAVCSIAGPAVAPVIAGF), 259 to 279 (WSMWEVLWAAGGCFVFLLFLP), 335 to 355 (PAILFTTVYIGLVYAIFYSYF), 374 to 394 (GLIFLGAIVGTLLVLPGYFAF), 415 to 435 (LVPALCGSVLVPVGLFLFAWT), 440 to 460 (LHWVVPTVGLVLEVAGMSLVI), 476 to 496 (ASLFAINDLARAYLAFAAIMW), and 512 to 532 (LLAGLTVGCVGGMFTLYWWGP).

It belongs to the major facilitator superfamily. CAR1 family.

It localises to the cell membrane. Functionally, MFS-type transporter; part of the gene cluster that mediates the biosynthesis of pyranoviolin A, a pyranonigrin analog with a C-3 methoxy group. May be involved in the secretion of pyranoviolin A. This chain is MFS-type transporter pyvG, found in Aspergillus violaceofuscus (strain CBS 115571).